We begin with the raw amino-acid sequence, 136 residues long: Fluoride-specific ion channel FluC (136 aa).

4 helical membrane passes run 3–23, 46–66, 78–98, and 109–129; these read TLPP…GAVL, ATLA…GVLF, LLIG…SLEV, and FAAL…VFGL. Na(+) is bound by residues glycine 86 and threonine 89.

The protein belongs to the fluoride channel Fluc/FEX (TC 1.A.43) family.

It localises to the cell inner membrane. It catalyses the reaction fluoride(in) = fluoride(out). Its activity is regulated as follows. Na(+) is not transported, but it plays an essential structural role and its presence is essential for fluoride channel function. Its function is as follows. Fluoride-specific ion channel. Important for reducing fluoride concentration in the cell, thus reducing its toxicity. The sequence is that of Fluoride-specific ion channel FluC from Erythrobacter litoralis (strain HTCC2594).